The following is a 91-amino-acid chain: Large ribosomal subunit protein uL22 (91 aa).

This sequence belongs to the universal ribosomal protein uL22 family. As to quaternary structure, part of the 50S ribosomal subunit.

Its function is as follows. This protein binds specifically to 23S rRNA; its binding is stimulated by other ribosomal proteins, e.g. L4, L17, and L20. It is important during the early stages of 50S assembly. It makes multiple contacts with different domains of the 23S rRNA in the assembled 50S subunit and ribosome. The globular domain of the protein is located near the polypeptide exit tunnel on the outside of the subunit, while an extended beta-hairpin is found that lines the wall of the exit tunnel in the center of the 70S ribosome. The protein is Large ribosomal subunit protein uL22 (rplV) of Pigeon pea witches'-broom phytoplasma.